Here is a 433-residue protein sequence, read N- to C-terminus: Acetylcholine receptor-like protein cup-4 (433 aa).

The first 24 residues, 1–24, serve as a signal peptide directing secretion; sequence MKIIIFVCFILIFYLPIQKKHVNS. 2 N-linked (GlcNAc...) asparagine glycosylation sites follow: asparagine 41 and asparagine 68. A disulfide bridge connects residues cysteine 178 and cysteine 192. Residues asparagine 237 and asparagine 249 are each glycosylated (N-linked (GlcNAc...) asparagine). The next 4 helical transmembrane spans lie at 282–302, 307–327, 337–357, and 413–433; these read EAAV…TFFI, STFL…HDLV, IPFC…TLVL, and PIIG…CLLL.

The protein belongs to the ligand-gated ion channel (TC 1.A.9) family. Acetylcholine receptor (TC 1.A.9.1) subfamily. Expressed in coelomocytes.

The protein localises to the cytoplasmic vesicle membrane. In terms of biological role, thought to regulate endocytosis in coelomocytes through modulation of phospholipase C activity. Possible acetylcholine receptor. This is Acetylcholine receptor-like protein cup-4 (cup-4) from Caenorhabditis elegans.